An 859-amino-acid polypeptide reads, in one-letter code: Photoactivated adenylate cyclase subunit beta-like protein FB (859 aa).

The region spanning 56–149 is the BLUF 1 domain; the sequence is LRRLMYLSKS…GRMYGDWHMK (94 aa). Residues 205–333 enclose the Guanylate cyclase 1 domain; the sequence is VVTFIYLVEF…DCINTTSRIA (129 aa). Residues 414-449 are disordered; the sequence is GLPNSQRPPIFDDTPKANRRPRTPGYGGRQRSDSQV. The 93-residue stretch at 471–563 folds into the BLUF 2 domain; that stretch reads LTTLTYISQA…RVYPSEWTLT (93 aa). A Guanylate cyclase 2 domain is found at 619–748; sequence VMLATDICSF…AVSARVMEVE (130 aa). The segment at 813-859 is disordered; that stretch reads AARSGEKPLTEPEAAKPDFRVSPGRVRHGDSGRRSNSAQGKRSIQVR. Over residues 815–831 the composition is skewed to basic and acidic residues; the sequence is RSGEKPLTEPEAAKPDF. Over residues 846-859 the composition is skewed to polar residues; sequence RSNSAQGKRSIQVR.

The protein belongs to the adenylyl cyclase class-4/guanylyl cyclase family. As to quaternary structure, heterotetramer of two alpha and two beta subunits.

Its subcellular location is the cell projection. The protein resides in the cilium. The protein localises to the flagellum. The protein is Photoactivated adenylate cyclase subunit beta-like protein FB of Euglena gracilis.